Reading from the N-terminus, the 150-residue chain is UPF0756 membrane protein YE1142 (150 aa).

Helical transmembrane passes span 1-21 (MAAL…GIIS), 51-71 (YGLT…IASG), 88-108 (ILAI…VSLM), and 114-134 (VVAG…GVPV).

The protein belongs to the UPF0756 family.

The protein localises to the cell membrane. The polypeptide is UPF0756 membrane protein YE1142 (Yersinia enterocolitica serotype O:8 / biotype 1B (strain NCTC 13174 / 8081)).